A 324-amino-acid polypeptide reads, in one-letter code: D-alanine--D-alanine ligase (324 aa).

An ATP-grasp domain is found at 121–321 (NQYLKGFGIR…IKDVMTDIIE (201 aa)). Residue 149–204 (INKIGLPCFIKPNAGGSSFGVTKVKTKEDIQPAIEKAFEESDEVMIEAFMKGTEIT) coordinates ATP. Mg(2+)-binding residues include Asp-275, Glu-288, and Asn-290.

Belongs to the D-alanine--D-alanine ligase family. The cofactor is Mg(2+). Mn(2+) is required as a cofactor.

It is found in the cytoplasm. It catalyses the reaction 2 D-alanine + ATP = D-alanyl-D-alanine + ADP + phosphate + H(+). Its pathway is cell wall biogenesis; peptidoglycan biosynthesis. Cell wall formation. The polypeptide is D-alanine--D-alanine ligase (Phocaeicola vulgatus (strain ATCC 8482 / DSM 1447 / JCM 5826 / CCUG 4940 / NBRC 14291 / NCTC 11154) (Bacteroides vulgatus)).